A 626-amino-acid chain; its full sequence is ATP-dependent RNA helicase cyt-19, mitochondrial (626 aa).

The short motif at 74–103 (ADLAALGVHENVVRAITHGMGYENMTEVQS) is the Q motif element. The region spanning 106-297 (ISPALKGKDI…RSYIDKNNFE (192 aa)) is the Helicase ATP-binding domain. 119-126 (AKTGTGKT) serves as a coordination point for ATP. The DEAD box signature appears at 241–244 (DEAD). The Helicase C-terminal domain maps to 329–493 (AMLELIEKAL…CASVNAADSG (165 aa)). Residues 569–626 (LRVETREHSMRPMGSGPGHRRDFNSRGPRRQSDDPFENALHRAQDLDRRPTRRQQASF) form a disordered region. An RNA-binding region spans residues 578-626 (MRPMGSGPGHRRDFNSRGPRRQSDDPFENALHRAQDLDRRPTRRQQASF). Residues 607–617 (ALHRAQDLDRR) show a composition bias toward basic and acidic residues.

The protein belongs to the DEAD box helicase family.

It is found in the mitochondrion matrix. It catalyses the reaction ATP + H2O = ADP + phosphate + H(+). With respect to regulation, activated by exposed helices in a group I intron RNA. Acts as an RNA chaperone to resolve non-native structures formed during RNA folding to promote mitochondrial group I, but also group II, intron splicing. Functions predominantly by disrupting accessible RNA secondary structure and depends on spontaneous openings in tightly packed RNAs to gain access to RNA helices. The sequence is that of ATP-dependent RNA helicase cyt-19, mitochondrial from Neurospora crassa (strain ATCC 24698 / 74-OR23-1A / CBS 708.71 / DSM 1257 / FGSC 987).